Reading from the N-terminus, the 374-residue chain is Putative phosphoserine aminotransferase (374 aa).

R48 is a binding site for L-glutamate. Pyridoxal 5'-phosphate-binding positions include 82-83 (AT), F106, T152, D174, and Q197. Residue K198 is modified to N6-(pyridoxal phosphate)lysine. A pyridoxal 5'-phosphate-binding site is contributed by 249 to 250 (NT).

It belongs to the class-V pyridoxal-phosphate-dependent aminotransferase family. SerC subfamily. Homodimer. The cofactor is pyridoxal 5'-phosphate.

The protein resides in the cytoplasm. The enzyme catalyses O-phospho-L-serine + 2-oxoglutarate = 3-phosphooxypyruvate + L-glutamate. The catalysed reaction is 4-(phosphooxy)-L-threonine + 2-oxoglutarate = (R)-3-hydroxy-2-oxo-4-phosphooxybutanoate + L-glutamate. It functions in the pathway amino-acid biosynthesis; L-serine biosynthesis; L-serine from 3-phospho-D-glycerate: step 2/3. It participates in cofactor biosynthesis; pyridoxine 5'-phosphate biosynthesis; pyridoxine 5'-phosphate from D-erythrose 4-phosphate: step 3/5. Functionally, catalyzes the reversible conversion of 3-phosphohydroxypyruvate to phosphoserine and of 3-hydroxy-2-oxo-4-phosphonooxybutanoate to phosphohydroxythreonine. This is Putative phosphoserine aminotransferase from Mycolicibacterium paratuberculosis (strain ATCC BAA-968 / K-10) (Mycobacterium paratuberculosis).